Consider the following 136-residue polypeptide: C-type natriuretic peptide prohormone (136 aa).

The first 21 residues, 1-21 (MSGQTSFYCGLLLVLLIQAQA), serve as a signal peptide directing secretion. Cys-120 and Cys-136 are oxidised to a cystine.

Belongs to the natriuretic peptide family. As to expression, CNP-115 is differentially processed to produce CNP-38 and CNP-39 in the heart and CNP-22 in the brain.

It is found in the secreted. Hormone which may be vasoactive and natriuretic. Has a cGMP-stimulating activity. The protein is C-type natriuretic peptide prohormone of Triakis scyllium (Banded houndshark).